The following is a 429-amino-acid chain: Putative chloride channel protein ClcB-like (429 aa).

Helical transmembrane passes span 1–21, 44–64, 146–166, 168–188, 200–220, 221–241, 259–279, 283–303, 315–335, 354–376, and 383–405; these read MLAI…AFRE, LPWW…GLTL, LLVA…PIAG, VFVC…PLLV, FFGY…GWEV, LTYL…LGLI, LALG…VWGN, VVNG…VLVC, GAVG…GLLY, AVVG…ILMI, and YQVV…ATGA.

The protein belongs to the chloride channel (TC 2.A.49) family. ClcB subfamily.

The protein resides in the cell inner membrane. In Ralstonia nicotianae (strain ATCC BAA-1114 / GMI1000) (Ralstonia solanacearum), this protein is Putative chloride channel protein ClcB-like.